Reading from the N-terminus, the 217-residue chain is Large ribosomal subunit protein uL29m (217 aa).

This sequence belongs to the universal ribosomal protein uL29 family. Component of the mitochondrial large ribosomal subunit. Mature mitochondrial ribosomes consist of a small (37S) and a large (54S) subunit. The 37S subunit contains at least 33 different proteins and 1 molecule of RNA (15S). The 54S subunit contains at least 45 different proteins and 1 molecule of RNA (21S).

Its subcellular location is the mitochondrion. The protein is Large ribosomal subunit protein uL29m (mrpl4) of Neosartorya fischeri (strain ATCC 1020 / DSM 3700 / CBS 544.65 / FGSC A1164 / JCM 1740 / NRRL 181 / WB 181) (Aspergillus fischerianus).